A 189-amino-acid chain; its full sequence is ECF RNA polymerase sigma-E factor (189 aa).

Positions 1 to 153 (MAEQLTDQAL…TAITLRELEG (153 aa)) are binds RNAP core. The segment at 25-92 (LVSRYQNKVA…KNYLTAQGRR (68 aa)) is sigma-70 factor domain-2. The Polymerase core binding motif lies at 48–61 (DVVQESFIKAYRSI). The sigma-70 factor domain-4 stretch occupies residues 129-180 (RIVFDTIHNLPEDLKTAITLRELEGLSYEDIAEIMDCPVGTVRSRIFRAREM). A DNA-binding region (H-T-H motif) is located at residues 156 to 175 (YEDIAEIMDCPVGTVRSRIF).

It belongs to the sigma-70 factor family. ECF subfamily. As to quaternary structure, interacts transiently with the RNAP catalytic core formed by RpoA, RpoB, RpoC and RpoZ (2 alpha, 1 beta, 1 beta' and 1 omega subunit) to form the RNAP holoenzyme that can initiate transcription. Interacts 1:1 with anti-sigma-E factor RseA which prevents binding to RNAP catalytic core.

Its subcellular location is the cytoplasm. ECF sigma-E is held in an inactive form by its cognate anti-sigma factor (RseA) until released by regulated intramembrane proteolysis (RIP). RIP occurs when an extracytoplasmic signal (periplasmic stress and excess LPS) triggers a concerted proteolytic cascade to transmit information and elicit cellular responses. The anti-sigma factor RseA is an inner membrane protein, binding sigma-E in the cytoplasm and RseB in the periplasm. RseA is first cut extracytoplasmically (site-1 protease, S1P, by DegS), then within the membrane itself (site-2 protease, S2P, by RseP), while cytoplasmic proteases (predominantly ClpX-ClpP) finish degrading the regulatory protein, liberating sigma-E. Degradation of RseA requires 2 signals to activate DegS; an outer membrane protein (OMP) signal activates DegS, while an LPS signal causes release of RseB from RseA, freeing RseA to be cleaved. Functionally, sigma factors are initiation factors that promote the attachment of RNA polymerase (RNAP) to specific initiation sites and are then released. Extracytoplasmic function (ECF) sigma-E controls the envelope stress response, responding to periplasmic protein stress, increased levels of periplasmic lipopolysaccharide (LPS) as well as heat shock and oxidative stress; it controls protein processing in the extracytoplasmic compartment. The protein is ECF RNA polymerase sigma-E factor (rpoE) of Haemophilus influenzae (strain ATCC 51907 / DSM 11121 / KW20 / Rd).